The sequence spans 292 residues: Diaminopimelate epimerase (292 aa).

Asn-14 and Asn-78 together coordinate substrate. Cys-87 functions as the Proton donor in the catalytic mechanism. Substrate contacts are provided by residues 88–89, Asn-164, Asn-197, and 221–222; these read GN and ER. Residue Cys-230 is the Proton acceptor of the active site. 231–232 is a substrate binding site; that stretch reads GT.

This sequence belongs to the diaminopimelate epimerase family. Homodimer.

The protein localises to the cytoplasm. The enzyme catalyses (2S,6S)-2,6-diaminopimelate = meso-2,6-diaminopimelate. The protein operates within amino-acid biosynthesis; L-lysine biosynthesis via DAP pathway; DL-2,6-diaminopimelate from LL-2,6-diaminopimelate: step 1/1. Its function is as follows. Catalyzes the stereoinversion of LL-2,6-diaminopimelate (L,L-DAP) to meso-diaminopimelate (meso-DAP), a precursor of L-lysine and an essential component of the bacterial peptidoglycan. This is Diaminopimelate epimerase from Leifsonia xyli subsp. xyli (strain CTCB07).